Consider the following 378-residue polypeptide: 1-acyl-sn-glycerol-3-phosphate acyltransferase delta (378 aa).

Residues 11–31 form a helical membrane-spanning segment; the sequence is FLCHLVFCYVFIASGLIINTV. Positions 96-101 match the HXXXXD motif motif; the sequence is HKFEID. 3 helical membrane-spanning segments follow: residues 125 to 145, 307 to 327, and 338 to 358; these read ELAYVPIIGWMWYFTEMVFCS, TLVNWLFWASLVLYPFFQFLV, and LASFILVFFVASMGVRWMIGV.

This sequence belongs to the 1-acyl-sn-glycerol-3-phosphate acyltransferase family.

Its subcellular location is the endoplasmic reticulum membrane. It carries out the reaction a 1-acyl-sn-glycero-3-phosphate + an acyl-CoA = a 1,2-diacyl-sn-glycero-3-phosphate + CoA. It catalyses the reaction (4Z,7Z,10Z,13Z,16Z,19Z)-docosahexaenoyl-CoA + 1-hexadecanoyl-sn-glycero-3-phosphate = 1-hexadecanoyl-2-(4Z,7Z,10Z,13Z,16Z,19Z-docosahexaenoyl)-sn-glycero-3-phosphate + CoA. The catalysed reaction is 1-octadecanoyl-sn-glycero-3-phosphate + (9Z,12Z)-octadecadienoyl-CoA = 1-octadecanoyl-2-(9Z,12Z-octadecadienoyl)-sn-glycero-3-phosphate + CoA. The enzyme catalyses 1-octadecanoyl-sn-glycero-3-phosphate + (4Z,7Z,10Z,13Z,16Z,19Z)-docosahexaenoyl-CoA = 1-octadecanoyl-2-(4Z,7Z,10Z,13Z,16Z,19Z-docosahexaenoyl)-sn-glycero-3-phosphate + CoA. It carries out the reaction (4Z,7Z,10Z,13Z,16Z,19Z)-docosahexaenoyl-CoA + 1-(9Z-octadecenoyl)-sn-glycero-3-phosphate = 1-(9Z-octadecenoyl)-2-(4Z,7Z,10Z,13Z,16Z,19Z-docosahexaenoyl)-sn-glycero-3-phosphate + CoA. It functions in the pathway phospholipid metabolism; CDP-diacylglycerol biosynthesis; CDP-diacylglycerol from sn-glycerol 3-phosphate: step 2/3. Functionally, converts 1-acyl-sn-glycerol-3-phosphate (lysophosphatidic acid or LPA) into 1,2-diacyl-sn-glycerol-3-phosphate (phosphatidic acid or PA) by incorporating an acyl moiety at the sn-2 position of the glycerol backbone. Exhibits high acyl-CoA specificity for polyunsaturated fatty acyl-CoA, especially docosahexaenoyl-CoA (22:6-CoA, DHA-CoA). This Macaca fascicularis (Crab-eating macaque) protein is 1-acyl-sn-glycerol-3-phosphate acyltransferase delta (AGPAT4).